Here is a 206-residue protein sequence, read N- to C-terminus: Venom allergen 5 (206 aa).

Intrachain disulfides connect Cys-5–Cys-18, Cys-9–Cys-103, Cys-28–Cys-96, and Cys-172–Cys-189. Residues 47–191 (LKVHNDFRQK…WYTHYLVCNY (145 aa)) enclose the SCP domain.

The protein belongs to the CRISP family. Venom allergen 5-like subfamily. In terms of tissue distribution, expressed by the venom gland.

It is found in the secreted. This chain is Venom allergen 5, found in Vespula vidua (Ground hornet).